A 400-amino-acid polypeptide reads, in one-letter code: Elongation factor Tu (400 aa).

In terms of domain architecture, tr-type G spans 10–210 (KPHCNVGTIG…VDSYIPIPPR (201 aa)). Residues 19 to 26 (GHVDHGKT) are G1. Residue 19–26 (GHVDHGKT) coordinates GTP. A Mg(2+)-binding site is contributed by threonine 26. The G2 stretch occupies residues 60–64 (GLTIA). The segment at 81–84 (DCPG) is G3. GTP contacts are provided by residues 81–85 (DCPGH) and 136–139 (NKCD). Residues 136-139 (NKCD) are G4. The G5 stretch occupies residues 174–176 (SAI).

Belongs to the TRAFAC class translation factor GTPase superfamily. Classic translation factor GTPase family. EF-Tu/EF-1A subfamily. In terms of assembly, monomer.

It localises to the cytoplasm. It catalyses the reaction GTP + H2O = GDP + phosphate + H(+). Functionally, GTP hydrolase that promotes the GTP-dependent binding of aminoacyl-tRNA to the A-site of ribosomes during protein biosynthesis. The polypeptide is Elongation factor Tu (Dehalococcoides mccartyi (strain ATCC BAA-2266 / KCTC 15142 / 195) (Dehalococcoides ethenogenes (strain 195))).